Here is a 97-residue protein sequence, read N- to C-terminus: Large ribosomal subunit protein bL25 (97 aa).

It belongs to the bacterial ribosomal protein bL25 family. Part of the 50S ribosomal subunit; part of the 5S rRNA/L5/L18/L25 subcomplex. Contacts the 5S rRNA. Binds to the 5S rRNA independently of L5 and L18.

Its function is as follows. This is one of the proteins that binds to the 5S RNA in the ribosome where it forms part of the central protuberance. This chain is Large ribosomal subunit protein bL25, found in Buchnera aphidicola subsp. Baizongia pistaciae (strain Bp).